Here is a 354-residue protein sequence, read N- to C-terminus: Replication factor C subunit 3 (354 aa).

41-48 provides a ligand contact to ATP; it reads GPSGSGKK.

It belongs to the activator 1 small subunits family. In terms of assembly, heterotetramer of subunits RFC2, RFC3, RFC4 and RFC5 that can form a complex with RFC1.

Its subcellular location is the nucleus. Functionally, may be involved in DNA replication and thus regulate cell proliferation. This Arabidopsis thaliana (Mouse-ear cress) protein is Replication factor C subunit 3 (RFC3).